A 165-amino-acid chain; its full sequence is Dihydrofolate reductase (165 aa).

The DHFR domain maps to 3 to 165; the sequence is VVGLIWAQST…RYRLHSYHRS (163 aa). Position 7–9 (7–9) interacts with substrate; sequence IWA. Residues 8–9 and 16–21 each bind NADP(+); these read WA and IGRDGG. Aspartate 29 lines the substrate pocket. 45 to 48 contacts NADP(+); it reads GRRT. Arginine 62 is a substrate binding site. NADP(+)-binding positions include 67–70 and 100–105; these read LSRQ and IGGEQI. Threonine 119 serves as a coordination point for substrate.

Belongs to the dihydrofolate reductase family.

It carries out the reaction (6S)-5,6,7,8-tetrahydrofolate + NADP(+) = 7,8-dihydrofolate + NADPH + H(+). It functions in the pathway cofactor biosynthesis; tetrahydrofolate biosynthesis; 5,6,7,8-tetrahydrofolate from 7,8-dihydrofolate: step 1/1. Its function is as follows. Key enzyme in folate metabolism. Catalyzes an essential reaction for de novo glycine and purine synthesis, and for DNA precursor synthesis. In Mycobacterium leprae (strain TN), this protein is Dihydrofolate reductase (folA).